The following is a 1368-amino-acid chain: DNA-directed RNA polymerase subunit beta (1368 aa).

It belongs to the RNA polymerase beta chain family. The RNAP catalytic core consists of 2 alpha, 1 beta, 1 beta' and 1 omega subunit. When a sigma factor is associated with the core the holoenzyme is formed, which can initiate transcription.

It carries out the reaction RNA(n) + a ribonucleoside 5'-triphosphate = RNA(n+1) + diphosphate. In terms of biological role, DNA-dependent RNA polymerase catalyzes the transcription of DNA into RNA using the four ribonucleoside triphosphates as substrates. This Legionella pneumophila (strain Lens) protein is DNA-directed RNA polymerase subunit beta.